Consider the following 406-residue polypeptide: Cysteine desulfurase (406 aa).

An N6-(pyridoxal phosphate)lysine modification is found at Lys-226. Catalysis depends on Cys-364, which acts as the Cysteine persulfide intermediate.

Belongs to the class-V pyridoxal-phosphate-dependent aminotransferase family. Csd subfamily. Homodimer. Interacts with SufE and the SufBCD complex composed of SufB, SufC and SufD. The interaction with SufE is required to mediate the direct transfer of the sulfur atom from the S-sulfanylcysteine. Requires pyridoxal 5'-phosphate as cofactor.

It localises to the cytoplasm. The enzyme catalyses (sulfur carrier)-H + L-cysteine = (sulfur carrier)-SH + L-alanine. It catalyses the reaction L-selenocysteine + AH2 = hydrogenselenide + L-alanine + A + H(+). It participates in cofactor biosynthesis; iron-sulfur cluster biosynthesis. Cysteine desulfurases mobilize the sulfur from L-cysteine to yield L-alanine, an essential step in sulfur metabolism for biosynthesis of a variety of sulfur-containing biomolecules. Component of the suf operon, which is activated and required under specific conditions such as oxidative stress and iron limitation. Acts as a potent selenocysteine lyase in vitro, that mobilizes selenium from L-selenocysteine. Selenocysteine lyase activity is however unsure in vivo. The sequence is that of Cysteine desulfurase from Klebsiella pneumoniae (strain 342).